The primary structure comprises 84 residues: Large ribosomal subunit protein uL23 (84 aa).

The protein belongs to the universal ribosomal protein uL23 family. Part of the 50S ribosomal subunit. Contacts protein L29.

Binds to 23S rRNA. One of the proteins that surrounds the polypeptide exit tunnel on the outside of the ribosome. The sequence is that of Large ribosomal subunit protein uL23 from Thermoplasma acidophilum (strain ATCC 25905 / DSM 1728 / JCM 9062 / NBRC 15155 / AMRC-C165).